The primary structure comprises 329 residues: 4-hydroxythreonine-4-phosphate dehydrogenase (329 aa).

Substrate contacts are provided by His-136 and Thr-137. A divalent metal cation is bound by residues His-166, His-211, and His-266. Substrate is bound by residues Lys-274, Asn-283, and Arg-292.

The protein belongs to the PdxA family. As to quaternary structure, homodimer. Zn(2+) is required as a cofactor. Requires Mg(2+) as cofactor. It depends on Co(2+) as a cofactor.

The protein localises to the cytoplasm. The catalysed reaction is 4-(phosphooxy)-L-threonine + NAD(+) = 3-amino-2-oxopropyl phosphate + CO2 + NADH. The protein operates within cofactor biosynthesis; pyridoxine 5'-phosphate biosynthesis; pyridoxine 5'-phosphate from D-erythrose 4-phosphate: step 4/5. Functionally, catalyzes the NAD(P)-dependent oxidation of 4-(phosphooxy)-L-threonine (HTP) into 2-amino-3-oxo-4-(phosphooxy)butyric acid which spontaneously decarboxylates to form 3-amino-2-oxopropyl phosphate (AHAP). This Escherichia fergusonii (strain ATCC 35469 / DSM 13698 / CCUG 18766 / IAM 14443 / JCM 21226 / LMG 7866 / NBRC 102419 / NCTC 12128 / CDC 0568-73) protein is 4-hydroxythreonine-4-phosphate dehydrogenase.